The primary structure comprises 304 residues: Triplex capsid protein 2 (304 aa).

The protein belongs to the herpesviridae TRX2 protein family. As to quaternary structure, interacts with TRX1 and major capisd protein/MCP.

It is found in the virion. The protein resides in the host nucleus. Structural component of the T=16 icosahedral capsid. The capsid is composed of pentamers and hexamers of major capsid protein/MCP, which are linked together by heterotrimers called triplexes. These triplexes are formed by a single molecule of triplex protein 1/TRX1 and two copies of triplex protein 2/TRX2. Additionally, TRX1 is required for efficient transport of TRX2 to the nucleus, which is the site of capsid assembly. The chain is Triplex capsid protein 2 from Saimiri sciureus (Common squirrel monkey).